A 112-amino-acid chain; its full sequence is T cell receptor alpha variable 13-1 (112 aa).

An N-terminal signal peptide occupies residues Met-1–Gly-20. Positions Glu-21–Ser-112 constitute an Ig-like domain. Cys-42 and Cys-109 are joined by a disulfide. The N-linked (GlcNAc...) asparagine glycan is linked to Asn-86.

As to quaternary structure, alpha-beta TR is a heterodimer composed of an alpha and beta chain; disulfide-linked. The alpha-beta TR is associated with the transmembrane signaling CD3 coreceptor proteins to form the TR-CD3 (TcR or TCR). The assembly of alpha-beta TR heterodimers with CD3 occurs in the endoplasmic reticulum where a single alpha-beta TR heterodimer associates with one CD3D-CD3E heterodimer, one CD3G-CD3E heterodimer and one CD247 homodimer forming a stable octameric structure. CD3D-CD3E and CD3G-CD3E heterodimers preferentially associate with TR alpha and TR beta chains, respectively. The association of the CD247 homodimer is the last step of TcR assembly in the endoplasmic reticulum and is required for transport to the cell surface.

The protein resides in the cell membrane. Its function is as follows. V region of the variable domain of T cell receptor (TR) alpha chain that participates in the antigen recognition. Alpha-beta T cell receptors are antigen specific receptors which are essential to the immune response and are present on the cell surface of T lymphocytes. Recognize peptide-major histocompatibility (MH) (pMH) complexes that are displayed by antigen presenting cells (APC), a prerequisite for efficient T cell adaptive immunity against pathogens. Binding of alpha-beta TR to pMH complex initiates TR-CD3 clustering on the cell surface and intracellular activation of LCK that phosphorylates the ITAM motifs of CD3G, CD3D, CD3E and CD247 enabling the recruitment of ZAP70. In turn ZAP70 phosphorylates LAT, which recruits numerous signaling molecules to form the LAT signalosome. The LAT signalosome propagates signal branching to three major signaling pathways, the calcium, the mitogen-activated protein kinase (MAPK) kinase and the nuclear factor NF-kappa-B (NF-kB) pathways, leading to the mobilization of transcription factors that are critical for gene expression and essential for T cell growth and differentiation. The T cell repertoire is generated in the thymus, by V-(D)-J rearrangement. This repertoire is then shaped by intrathymic selection events to generate a peripheral T cell pool of self-MH restricted, non-autoaggressive T cells. Post-thymic interaction of alpha-beta TR with the pMH complexes shapes TR structural and functional avidity. The chain is T cell receptor alpha variable 13-1 from Homo sapiens (Human).